Consider the following 585-residue polypeptide: Probable ubiquitin carboxyl-terminal hydrolase 9 (585 aa).

Residues M1–E23 form a disordered region. The USP domain occupies Y41–A424. C50 serves as the catalytic Nucleophile. The disordered stretch occupies residues C85–S110. H375 serves as the catalytic Proton acceptor. Polar residues predominate over residues S447–T470. Residues S447–D473 are disordered. S505 bears the Phosphoserine mark. Disordered regions lie at residues F511–F530 and K540–R585. A compositionally biased stretch (polar residues) spans F542–K551. S549 carries the phosphoserine modification. A compositionally biased stretch (basic and acidic residues) spans S553–H570. Residues L574–R585 are compositionally biased toward polar residues.

It belongs to the peptidase C19 family. As to quaternary structure, interacts with bun107 and bun62.

It localises to the nucleus. The protein localises to the cytoplasm. Its subcellular location is the cell tip. The catalysed reaction is Thiol-dependent hydrolysis of ester, thioester, amide, peptide and isopeptide bonds formed by the C-terminal Gly of ubiquitin (a 76-residue protein attached to proteins as an intracellular targeting signal).. Ubiquitin C-terminal hydrolase involved in regulating actin dynamics and/or endocytosis at cell tips and septa. The polypeptide is Probable ubiquitin carboxyl-terminal hydrolase 9 (ubp9) (Schizosaccharomyces pombe (strain 972 / ATCC 24843) (Fission yeast)).